The following is a 453-amino-acid chain: Allantoinase (453 aa).

Residues His-59, His-61, Lys-146, His-186, His-242, and Asp-315 each coordinate Zn(2+). Lys-146 carries the post-translational modification N6-carboxylysine.

The protein belongs to the metallo-dependent hydrolases superfamily. Allantoinase family. Homotetramer. Requires Zn(2+) as cofactor. In terms of processing, carboxylation allows a single lysine to coordinate two zinc ions.

It carries out the reaction (S)-allantoin + H2O = allantoate + H(+). The protein operates within nitrogen metabolism; (S)-allantoin degradation; allantoate from (S)-allantoin: step 1/1. In terms of biological role, catalyzes the conversion of allantoin (5-ureidohydantoin) to allantoic acid by hydrolytic cleavage of the five-member hydantoin ring. The chain is Allantoinase from Salmonella choleraesuis (strain SC-B67).